A 228-amino-acid chain; its full sequence is L-ribulose-5-phosphate 4-epimerase UlaF (228 aa).

Substrate-binding positions include 26-27 (GN), 43-44 (SG), and 72-73 (SS). Zn(2+) is bound by residues D74, H93, and H95. D118 acts as the Proton donor/acceptor in catalysis. H167 is a Zn(2+) binding site. Y225 acts as the Proton donor/acceptor in catalysis.

Belongs to the aldolase class II family. AraD/FucA subfamily. Zn(2+) is required as a cofactor.

The enzyme catalyses L-ribulose 5-phosphate = D-xylulose 5-phosphate. Its pathway is cofactor degradation; L-ascorbate degradation; D-xylulose 5-phosphate from L-ascorbate: step 4/4. Functionally, catalyzes the isomerization of L-ribulose 5-phosphate to D-xylulose 5-phosphate. Is involved in the anaerobic L-ascorbate utilization. This Shigella boydii serotype 18 (strain CDC 3083-94 / BS512) protein is L-ribulose-5-phosphate 4-epimerase UlaF.